Reading from the N-terminus, the 177-residue chain is MKIVGDSEHFKQPYDSNDEYVSKTEDKRDCEAAQKVGMELVSLSKTQLDKIELDEHLYDSIQQAHKIKPKTEAYRRHMQYIGKLMRNVDIEPIKASLAVVLNKNSNETAKLQMFEKMRERLLTQGDGEIQTVVEHYPQLDRQKLRTLVRQATKELAKGPESKSSKELFKYLRSEIQD.

A compositionally biased stretch (basic and acidic residues) spans 1–12; it reads MKIVGDSEHFKQ. The interval 1-26 is disordered; that stretch reads MKIVGDSEHFKQPYDSNDEYVSKTED.

It belongs to the DarP family.

It is found in the cytoplasm. Functionally, member of a network of 50S ribosomal subunit biogenesis factors which assembles along the 30S-50S interface, preventing incorrect 23S rRNA structures from forming. Promotes peptidyl transferase center (PTC) maturation. This chain is Dual-action ribosomal maturation protein DarP, found in Shewanella oneidensis (strain ATCC 700550 / JCM 31522 / CIP 106686 / LMG 19005 / NCIMB 14063 / MR-1).